Here is a 633-residue protein sequence, read N- to C-terminus: MAPAIQANSNGTMNVNGKCRDGHTAEQRNVMDDALPIEITVEERGKAFAKDPWAHEYSVSEQALRDQERLIDQYHHKVLIVGAGHGGLLFAVRLLQTGNFGINDILIVDEAAGFGGTWYWNRYPGLMCDTESYIYMPLLEETGYMPREKYASGPELRANAERISHLWGLKRRALFRTAIKALDWNDAQGQWKATAQGLGKLQQVKLSADFAIIATGLYASPRIPDFPGLWNYKGPVFHPARWDYSVTGGTPERPEMTRLHNKRVAIVGTGASAVQIVPQLARHSKHLMVFQRTPSGVDQRDNCYTDKARWKEIASTKGWQRQRMENFNAFIGDPKSAPAVNMVGDRWTSMPSYSMTIGANGITKPGYQDEMREMDSIRQGKIRSRVHAIVHNPARADILSPNYPGWCKRPCFHDDYLAAFNEPNVDLVDLQGKGSISFTATGLAVADTQYEADVVIVSTGYTSPKDRSSPGSRANIAITGRGGLEMERKWESGLSTLHGVMTRDFPNLFFPGPAQSGVCTNQTYTLDQLARHVAYIMARGIQQCNGQAMVVEPSEEAERAWADQVVQRAGDSLTAFAACTSTSLFSAAKMTKDQIMNAARLTTWREGIASYVIELEAWRSEGTLQGLEIKRLA.

Residues 117–120 (TWYW), 129–130 (DT), and Y135 each bind FAD. 127-129 (MCD) lines the NADP(+) pocket. NADP(+)-binding positions include 269-275 (TGASAVQ) and 292-293 (RT).

Belongs to the FAD-binding monooxygenase family. FAD is required as a cofactor.

It functions in the pathway secondary metabolite biosynthesis; terpenoid biosynthesis. Functionally, FAD-binding monooxygenase; part of the gene cluster that mediates the biosynthesis of anditomin, a fungal meroterpenoid. The first step of the pathway is the synthesis of 3,5-dimethylorsellinic acid (DMOA) by the polyketide synthase andM. DMOA is then converted to the phthalide compound 5,7-dihydroxy-4,6-dimethylphthalide (DHDMP) by the cytochrome P450 monooxygenase andK, which is further prenylated by the prenyltransferase andD to yield farnesyl-DHDMP. Further epoxidation by the FAD-dependent monooxygenase andE leads to epoxyfarnesyl-DHDMP. The next step involves the terpene cyclase andB that converts epoxyfarnesyl-DHDMP into preandiloid A through opening of the epoxide ring followed by the cyclization of the farnesyl moiety. Preandiloid A is in turn oxidized at the C-3 hydroxyl group to yield preandiloid B by the dehydrogenase andC. The dioxygenase andA is solely responsible for the dehydrogenation of preandiloid B leading to the enone preandiloid C, as well as for the intriguing structural rearrangement to generate the bicyclo[2.2.2]octane core, transforming preandiloid C into andiconin. FAD-binding monooxygenase andJ then produces andilesin D which is reduced by dehydrogenase andI to yield andilesin A. Action of acetyltransferase andG followed by a spontaneous acetate elimination leads then to andilesin B, which is in turn substrate of the short chain dehydrogenase andH to yield andilesin C. Finally, the dioxygenase andF catalyzes the transformation of andilesin C to anditomin. The protein is FAD-binding monooxygenase andJ of Emericella variicolor (Aspergillus stellatus).